A 364-amino-acid chain; its full sequence is DNA replication and repair protein RecF (364 aa).

23–30 (GPNGIGKS) contacts ATP.

The protein belongs to the RecF family.

It localises to the cytoplasm. The RecF protein is involved in DNA metabolism; it is required for DNA replication and normal SOS inducibility. RecF binds preferentially to single-stranded, linear DNA. It also seems to bind ATP. The chain is DNA replication and repair protein RecF from Synechococcus sp. (strain CC9605).